Consider the following 249-residue polypeptide: 3-deoxy-D-manno-octulosonic acid kinase (249 aa).

Aspartate 175 is a catalytic residue.

The protein belongs to the protein kinase superfamily. KdkA/RfaP family.

It localises to the cell inner membrane. The enzyme catalyses an alpha-Kdo-(2-&gt;6)-lipid IVA + ATP = a 4-O-phospho-alpha-Kdo-(2-&gt;6)-lipid IVA + ADP + H(+). It participates in bacterial outer membrane biogenesis; LPS core biosynthesis. In terms of biological role, catalyzes the ATP-dependent phosphorylation of the 3-deoxy-D-manno-octulosonic acid (Kdo) residue in Kdo-lipid IV(A) at the 4-OH position. This Xanthomonas campestris pv. campestris (strain 8004) protein is 3-deoxy-D-manno-octulosonic acid kinase.